A 131-amino-acid polypeptide reads, in one-letter code: Cell cycle protein GpsB (131 aa).

Residues 39-76 adopt a coiled-coil conformation; that stretch reads LDGIIRDYEAFTNEIDRLKEENTKLFSRVDELTKQLSV. Positions 111–131 are disordered; it reads KLSDSSVDNHDDGNHSDVDQY. The span at 117-131 shows a compositional bias: basic and acidic residues; sequence VDNHDDGNHSDVDQY.

Belongs to the GpsB family. As to quaternary structure, forms polymers through the coiled coil domains. Interacts with PBP1, MreC and EzrA.

The protein resides in the cytoplasm. Functionally, divisome component that associates with the complex late in its assembly, after the Z-ring is formed, and is dependent on DivIC and PBP2B for its recruitment to the divisome. Together with EzrA, is a key component of the system that regulates PBP1 localization during cell cycle progression. Its main role could be the removal of PBP1 from the cell pole after pole maturation is completed. Also contributes to the recruitment of PBP1 to the division complex. Not essential for septum formation. The polypeptide is Cell cycle protein GpsB (Lacticaseibacillus casei (strain BL23) (Lactobacillus casei)).